The primary structure comprises 252 residues: Hydroxyacylglutathione hydrolase (252 aa).

7 residues coordinate Zn(2+): His54, His56, Asp58, His59, His111, Asp130, and His170.

The protein belongs to the metallo-beta-lactamase superfamily. Glyoxalase II family. Monomer. Requires Zn(2+) as cofactor.

The enzyme catalyses an S-(2-hydroxyacyl)glutathione + H2O = a 2-hydroxy carboxylate + glutathione + H(+). It functions in the pathway secondary metabolite metabolism; methylglyoxal degradation; (R)-lactate from methylglyoxal: step 2/2. Its function is as follows. Thiolesterase that catalyzes the hydrolysis of S-D-lactoyl-glutathione to form glutathione and D-lactic acid. This Francisella tularensis subsp. holarctica (strain FTNF002-00 / FTA) protein is Hydroxyacylglutathione hydrolase.